The chain runs to 313 residues: tRNA dimethylallyltransferase (313 aa).

Residue 12–19 coordinates ATP; the sequence is GPTASGKS. Residue 14 to 19 participates in substrate binding; that stretch reads TASGKS. 2 interaction with substrate tRNA regions span residues 37–40 and 161–165; these read DSMQ and QRSIR.

It belongs to the IPP transferase family. In terms of assembly, monomer. Requires Mg(2+) as cofactor.

The catalysed reaction is adenosine(37) in tRNA + dimethylallyl diphosphate = N(6)-dimethylallyladenosine(37) in tRNA + diphosphate. In terms of biological role, catalyzes the transfer of a dimethylallyl group onto the adenine at position 37 in tRNAs that read codons beginning with uridine, leading to the formation of N6-(dimethylallyl)adenosine (i(6)A). The protein is tRNA dimethylallyltransferase of Pelagibacter ubique (strain HTCC1062).